The chain runs to 260 residues: Hydroxyethylthiazole kinase (260 aa).

A substrate-binding site is contributed by Met38. ATP is bound by residues Arg114 and Thr159. Position 186 (Gly186) interacts with substrate.

This sequence belongs to the Thz kinase family. It depends on Mg(2+) as a cofactor.

The enzyme catalyses 5-(2-hydroxyethyl)-4-methylthiazole + ATP = 4-methyl-5-(2-phosphooxyethyl)-thiazole + ADP + H(+). It participates in cofactor biosynthesis; thiamine diphosphate biosynthesis; 4-methyl-5-(2-phosphoethyl)-thiazole from 5-(2-hydroxyethyl)-4-methylthiazole: step 1/1. Catalyzes the phosphorylation of the hydroxyl group of 4-methyl-5-beta-hydroxyethylthiazole (THZ). The protein is Hydroxyethylthiazole kinase of Helicobacter pylori (strain HPAG1).